Here is a 1430-residue protein sequence, read N- to C-terminus: FYVE, RhoGEF and PH domain-containing protein 6 (1430 aa).

A disordered region spans residues 1-36 (MTSAAEIKKPPVAPKPKFVVANNKPAPPPIAPKPDI). Residues 15-24 (KPKFVVANNK) show a composition bias toward low complexity. Residue Ser-231 is modified to Phosphoserine. A disordered region spans residues 330–351 (CVDTPSESTEEPGNSDSSSSCL). Residues 334–351 (PSESTEEPGNSDSSSSCL) are compositionally biased toward polar residues. The residue at position 515 (Ser-515) is a Phosphoserine. Positions 516–538 (EELLEKSSYPSSEEKSSEKSLER) are disordered. The span at 527 to 538 (SEEKSSEKSLER) shows a compositional bias: basic and acidic residues. Phosphoserine is present on residues Ser-554, Ser-605, Ser-692, and Ser-721. 2 disordered regions span residues 695-739 (NYSL…PYKS) and 800-869 (PDGQ…NGMK). Positions 728–739 (SRESSSQAPYKS) are enriched in polar residues. Residues 831–847 (PSDEEEIINSSDEDDVS) are compositionally biased toward acidic residues. A compositionally biased stretch (basic and acidic residues) spans 851–868 (SKGEPDPLEDKQDEDNGM). The DH domain maps to 871–1060 (KVHHIAKEIM…IEVANHANDT (190 aa)). The PH 1 domain maps to 1089 to 1183 (VFLKEGILMK…WLEAISRAIE (95 aa)). Ser-1197 is subject to Phosphoserine. The FYVE-type zinc finger occupies 1222–1281 (DTRATMCMICTSEFTLTWRRHHCRACGKIVCQACSSNKYGLDYLKNQPARVCEHCFQELQ). 8 residues coordinate Zn(2+): Cys-1228, Cys-1231, Cys-1244, Cys-1247, Cys-1252, Cys-1255, Cys-1273, and Cys-1276. A PH 2 domain is found at 1333–1429 (DSSMSGYLYR…WIEAFQEGTI (97 aa)).

Its subcellular location is the cytoplasm. It is found in the cytoskeleton. Its function is as follows. May activate CDC42, a member of the Ras-like family of Rho- and Rac proteins, by exchanging bound GDP for free GTP. May play a role in regulating the actin cytoskeleton and cell shape. The polypeptide is FYVE, RhoGEF and PH domain-containing protein 6 (FGD6) (Homo sapiens (Human)).